We begin with the raw amino-acid sequence, 448 residues long: Putative flavin-containing monooxygenase FMO GS-OX-like 10 (448 aa).

18–23 (GAGAAG) contributes to the FAD binding site. Position 212-217 (212-217 (GSSVSG)) interacts with NADP(+).

Belongs to the FMO family. FAD serves as cofactor.

Catalyzes the conversion of methylthioalkyl glucosinolates of any chain length into methylsulfinylalkyl glucosinolates. This Arabidopsis thaliana (Mouse-ear cress) protein is Putative flavin-containing monooxygenase FMO GS-OX-like 10.